The following is a 175-amino-acid chain: Cell division protein SepF (175 aa).

The segment covering 20 to 29 has biased composition (acidic residues); sequence RYEDYDDYDD. The interval 20-88 is disordered; the sequence is RYEDYDDYDD…ERPTPPLRVT (69 aa). 2 stretches are compositionally biased toward basic and acidic residues: residues 30–47 and 54–73; these read AEPH…DLGS and RRMD…RRVS.

Belongs to the SepF family. As to quaternary structure, homodimer. Interacts with FtsZ.

Its subcellular location is the cytoplasm. In terms of biological role, cell division protein that is part of the divisome complex and is recruited early to the Z-ring. Probably stimulates Z-ring formation, perhaps through the cross-linking of FtsZ protofilaments. Its function overlaps with FtsA. The polypeptide is Cell division protein SepF (Acidothermus cellulolyticus (strain ATCC 43068 / DSM 8971 / 11B)).